The sequence spans 1488 residues: Chromosome partition protein MukB (1488 aa).

34-41 (GGNGAGKS) contributes to the ATP binding site. 3 coiled-coil regions span residues 326-418 (LEAD…QYNQ), 444-472 (LDTF…QTAH), and 509-602 (RHLA…QRAP). A flexible hinge region spans residues 666–783 (PGGAEDQRLN…SLPIFGRAAR (118 aa)). Coiled coils occupy residues 835–923 (EAEI…AKLE), 977–1116 (EMLS…AKAG), and 1209–1265 (VEAI…LQSV).

It belongs to the SMC family. MukB subfamily. Homodimerization via its hinge domain. Binds to DNA via its C-terminal region. Interacts, and probably forms a ternary complex, with MukE and MukF via its C-terminal region. The complex formation is stimulated by calcium or magnesium. Interacts with tubulin-related protein FtsZ.

It is found in the cytoplasm. Its subcellular location is the nucleoid. Its function is as follows. Plays a central role in chromosome condensation, segregation and cell cycle progression. Functions as a homodimer, which is essential for chromosome partition. Involved in negative DNA supercoiling in vivo, and by this means organize and compact chromosomes. May achieve or facilitate chromosome segregation by condensation DNA from both sides of a centrally located replisome during cell division. The chain is Chromosome partition protein MukB from Salmonella paratyphi B (strain ATCC BAA-1250 / SPB7).